A 122-amino-acid polypeptide reads, in one-letter code: FMN-binding protein (122 aa).

As to quaternary structure, monomer and homodimer. It depends on FMN as a cofactor.

The protein localises to the cytoplasm. Functionally, functions as a redox protein with a potential of -325 mV. This is FMN-binding protein from Nitratidesulfovibrio vulgaris (strain DSM 19637 / Miyazaki F) (Desulfovibrio vulgaris).